The chain runs to 725 residues: Dolichyl-phosphate-mannose--protein mannosyltransferase 5 (725 aa).

A run of 6 helical transmembrane segments spans residues 34 to 54 (QFAV…LYIP), 117 to 137 (YLWL…LTFF), 145 to 165 (SVIS…VTVS), 192 to 212 (IPFT…LGLN), 219 to 239 (GLFT…EILG), and 256 to 276 (VVAF…IHFE). 3 MIR domains span residues 303–356 (PLQV…IETK), 368–427 (QREV…IRML), and 439–495 (LIKL…VESS). An N-linked (GlcNAc...) asparagine glycan is attached at N409. 4 consecutive transmembrane segments (helical) span residues 570–590 (IYYL…LIAI), 619–639 (FYNN…PYCL), 644–664 (LYLH…SQYL), and 673–693 (IIGG…FYEF).

Belongs to the glycosyltransferase 39 family.

Its subcellular location is the endoplasmic reticulum membrane. It carries out the reaction a di-trans,poly-cis-dolichyl beta-D-mannosyl phosphate + L-seryl-[protein] = 3-O-(alpha-D-mannosyl)-L-seryl-[protein] + a di-trans,poly-cis-dolichyl phosphate + H(+). The enzyme catalyses a di-trans,poly-cis-dolichyl beta-D-mannosyl phosphate + L-threonyl-[protein] = 3-O-(alpha-D-mannosyl)-L-threonyl-[protein] + a di-trans,poly-cis-dolichyl phosphate + H(+). Its pathway is protein modification; protein glycosylation. In terms of biological role, protein mannosyltransferase (PMT) involved in hyphal morphogenesis and drug sensitivity. Transfers mannose from Dol-P-mannose to Ser or Thr residues on proteins. PMT1, PMT2 and PMT4 account for most of the protein-O-glycosylation activity, while PMT5 and PMT6 may specifically modulate a much narrower spectrum of target proteins. Required for biofilm formation. This is Dolichyl-phosphate-mannose--protein mannosyltransferase 5 from Candida albicans (strain SC5314 / ATCC MYA-2876) (Yeast).